The chain runs to 340 residues: Lysophospholipase L2 (340 aa).

It localises to the cell inner membrane. The catalysed reaction is a 1-acyl-sn-glycero-3-phosphocholine + H2O = sn-glycerol 3-phosphocholine + a fatty acid + H(+). The chain is Lysophospholipase L2 (pldB) from Escherichia coli O6:H1 (strain CFT073 / ATCC 700928 / UPEC).